A 79-amino-acid polypeptide reads, in one-letter code: Quinohemoprotein amine dehydrogenase subunit gamma (79 aa).

The segment at residues 7 to 16 (CTATTDPGWE) is a cross-link (4-cysteinyl-glutamic acid (Cys-Glu)). 2 cross-links (3-cysteinyl-aspartic acid (Cys-Asp)) span residues 27–33 (CQPMEAD) and 41–49 (CWWPAQVPD). The active-site Proton acceptor is the Asp-33. The 4'-cysteinyl-tryptophylquinone (Cys-Trp) cross-link spans 37–43 (CSDPCWW). A Tryptophylquinone modification is found at Trp-43.

This sequence belongs to the quinohemoprotein amine dehydrogenase subunit gamma family. Heterotrimer of an alpha, a beta and a gamma subunit. Cysteine tryptophylquinone residue serves as cofactor. In terms of processing, the cysteine tryptophylquinone (CTQ) is generated by oxidation of the indole ring of a tryptophan residue to form tryptophylquinone, followed by covalent cross-linking with a cysteine residue.

Its subcellular location is the periplasm. It catalyses the reaction an aliphatic amine + A + H2O = an aldehyde + AH2 + NH4(+). Catalyzes the oxidative deamination of a wide range of aliphatic monoamines and diamines. The physiological electron acceptor is an azurin-like blue protein. In Pseudomonas putida (strain ATCC 47054 / DSM 6125 / CFBP 8728 / NCIMB 11950 / KT2440), this protein is Quinohemoprotein amine dehydrogenase subunit gamma (qhnDH).